The sequence spans 179 residues: ATP-dependent protease subunit HslV (179 aa).

Thr-9 is a catalytic residue. Residues Ala-164, Cys-167, and Thr-170 each coordinate Na(+).

The protein belongs to the peptidase T1B family. HslV subfamily. A double ring-shaped homohexamer of HslV is capped on each side by a ring-shaped HslU homohexamer. The assembly of the HslU/HslV complex is dependent on binding of ATP.

The protein resides in the cytoplasm. The catalysed reaction is ATP-dependent cleavage of peptide bonds with broad specificity.. With respect to regulation, allosterically activated by HslU binding. Protease subunit of a proteasome-like degradation complex believed to be a general protein degrading machinery. This is ATP-dependent protease subunit HslV from Syntrophobacter fumaroxidans (strain DSM 10017 / MPOB).